The chain runs to 588 residues: Protein kinase C iota type (588 aa).

The 84-residue stretch at 18–101 (QVRVKAYYRG…SELIIHVFPC (84 aa)) folds into the PB1 domain. A Phorbol-ester/DAG-type zinc finger spans residues 133–183 (GHAFQAKRFNRRAHCAICTDRIWGLGRQGYKCINCKLLVHKKCHKLVTVEC). Residues 194–213 (GRIDPGSTHPEHPDQVLGKK) form a disordered region. One can recognise a Protein kinase domain in the interval 246 to 514 (FDLLRVIGRG…FADIMAHPFF (269 aa)). ATP is bound by residues 252-260 (IGRGSYAKV) and K275. Residue D370 is the Proton acceptor of the active site. Phosphothreonine is present on residues T404 and T556. The AGC-kinase C-terminal domain maps to 515 to 586 (RNVDWDLMEQ…INPLLMSAEE (72 aa)).

The protein belongs to the protein kinase superfamily. AGC Ser/Thr protein kinase family. PKC subfamily.

It catalyses the reaction L-seryl-[protein] + ATP = O-phospho-L-seryl-[protein] + ADP + H(+). It carries out the reaction L-threonyl-[protein] + ATP = O-phospho-L-threonyl-[protein] + ADP + H(+). Exhibits an elevated basal enzymatic activity and is not regulated by diacylglycerol, phosphatidylserine, phorbol esters or calcium ions. Two specific sites, Thr-404 (activation loop of the kinase domain) and Thr-556 (turn motif), need to be phosphorylated for its full activation. Its function is as follows. Calcium- and diacylglycerol-independent serine/ threonine-protein kinase that plays a general protective role against apoptotic stimuli, is involved in NF-kappa-B activation, cell survival, differentiation and polarity, and contributes to the regulation of microtubule dynamics in the early secretory pathway. Is required for the formation and maintenance of the zonula adherens during early epithelial development and plays a critical role in organ morphogenesis and in regulating the orientation of cell division. Required for polarized epithelial organization, myocardium coherence and cell connectivity in the early somite stages. Required for heart cone tilt and development of circulatory architecture during embryogenesis. The polypeptide is Protein kinase C iota type (prkci) (Danio rerio (Zebrafish)).